A 166-amino-acid polypeptide reads, in one-letter code: Putative 4-hydroxy-4-methyl-2-oxoglutarate aldolase 3 (166 aa).

Residue alanine 2 is modified to N-acetylalanine. Residues 81–84 and arginine 103 each bind substrate; that span reads GGNL. Aspartate 104 is an a divalent metal cation binding site.

It belongs to the class II aldolase/RraA-like family. In terms of assembly, homotrimer. The cofactor is a divalent metal cation.

The catalysed reaction is 4-hydroxy-4-methyl-2-oxoglutarate = 2 pyruvate. It carries out the reaction oxaloacetate + H(+) = pyruvate + CO2. Catalyzes the aldol cleavage of 4-hydroxy-4-methyl-2-oxoglutarate (HMG) into 2 molecules of pyruvate. Also contains a secondary oxaloacetate (OAA) decarboxylase activity due to the common pyruvate enolate transition state formed following C-C bond cleavage in the retro-aldol and decarboxylation reactions. The protein is Putative 4-hydroxy-4-methyl-2-oxoglutarate aldolase 3 of Arabidopsis thaliana (Mouse-ear cress).